Consider the following 115-residue polypeptide: T cell receptor beta variable 7-8 (115 aa).

Residues 1-21 (MGTRLLCWVVLGFLGTDHTGA) form the signal peptide. The Ig-like domain occupies 22–115 (GVSQSPRYKV…SAVYLCASSL (94 aa)). A disulfide bridge connects residues C42 and C111.

Alpha-beta TR is a heterodimer composed of an alpha and beta chain; disulfide-linked. The alpha-beta TR is associated with the transmembrane signaling CD3 coreceptor proteins to form the TR-CD3 (TcR or TCR). The assembly of alpha-beta TR heterodimers with CD3 occurs in the endoplasmic reticulum where a single alpha-beta TR heterodimer associates with one CD3D-CD3E heterodimer, one CD3G-CD3E heterodimer and one CD247 homodimer forming a stable octameric structure. CD3D-CD3E and CD3G-CD3E heterodimers preferentially associate with TR alpha and TR beta chains, respectively. The association of the CD247 homodimer is the last step of TcR assembly in the endoplasmic reticulum and is required for transport to the cell surface.

It localises to the cell membrane. V region of the variable domain of T cell receptor (TR) beta chain that participates in the antigen recognition. Alpha-beta T cell receptors are antigen specific receptors which are essential to the immune response and are present on the cell surface of T lymphocytes. Recognize peptide-major histocompatibility (MH) (pMH) complexes that are displayed by antigen presenting cells (APC), a prerequisite for efficient T cell adaptive immunity against pathogens. Binding of alpha-beta TR to pMH complex initiates TR-CD3 clustering on the cell surface and intracellular activation of LCK that phosphorylates the ITAM motifs of CD3G, CD3D, CD3E and CD247 enabling the recruitment of ZAP70. In turn ZAP70 phosphorylates LAT, which recruits numerous signaling molecules to form the LAT signalosome. The LAT signalosome propagates signal branching to three major signaling pathways, the calcium, the mitogen-activated protein kinase (MAPK) kinase and the nuclear factor NF-kappa-B (NF-kB) pathways, leading to the mobilization of transcription factors that are critical for gene expression and essential for T cell growth and differentiation. The T cell repertoire is generated in the thymus, by V-(D)-J rearrangement. This repertoire is then shaped by intrathymic selection events to generate a peripheral T cell pool of self-MH restricted, non-autoaggressive T cells. Post-thymic interaction of alpha-beta TR with the pMH complexes shapes TR structural and functional avidity. The sequence is that of T cell receptor beta variable 7-8 from Homo sapiens (Human).